Reading from the N-terminus, the 620-residue chain is Ferric/cupric reductase transmembrane component 7 (620 aa).

At 1–45 the chain is on the extracellular side; the sequence is MIEERDLVLSNGIHCIADIHSELYARLKKESQAATPWVYQKQYGK. A helical membrane pass occupies residues 46–66; the sequence is FVTYFVAVIIFLSLIKKLAFM. Residues 67-107 are Cytoplasmic-facing; the sequence is YYDSSEEFLPEKKNSPTTPSVFLARIMTKLVAFNRYICYRK. The helical transmembrane segment at 108–128 threads the bilayer; sequence FPTLIFSYLGIPTSVGTFLVV. The Extracellular portion of the chain corresponds to 129 to 167; that stretch reads MATTLYTLLYCFVPHPFYRPCAGFGSPPLSVRAGIMAIS. Positions 161–320 constitute a Ferric oxidoreductase domain; sequence AGIMAISLVP…LAVKGYLRPG (160 aa). The chain crosses the membrane as a helical span at residues 168-188; sequence LVPFVFSLSGKINVIGWLVGL. Over 189 to 194 the chain is Cytoplasmic; sequence SYEKIN. The helical transmembrane segment at 195–215 threads the bilayer; that stretch reads IYHQWASILCLFFSWVHVIPF. Residues His197 and His211 each contribute to the heme site. The Extracellular segment spans residues 216 to 237; it reads LRQARHEGGYERMHQRWKASDM. A helical membrane pass occupies residues 238–258; that stretch reads WRSGVPPILFLNLLWLSSLPI. At 259 to 265 the chain is on the cytoplasmic side; sequence ARRHFYE. Residues 266-286 traverse the membrane as a helical segment; the sequence is IFLQLHWILAVGFYISLFYHV. The heme site is built by His271 and His285. The Extracellular segment spans residues 287-292; it reads YPELNS. Residues 293 to 313 traverse the membrane as a helical segment; it reads HMYLVATIVVWFAQLFYRLAV. Residues 314–620 lie on the Cytoplasmic side of the membrane; sequence KGYLRPGRSF…CYLHSESFGY (307 aa). In terms of domain architecture, FAD-binding FR-type spans 321–419; sequence RSFMASTIAN…DGPYGGIERD (99 aa). 369 to 375 contacts FAD; the sequence is HPFSIFP. NADP(+) is bound at residue 411–414; sequence GPYG. The disordered stretch occupies residues 519–543; that stretch reads SDQSDLAKREKDTEFGQDDTESNST. Basic and acidic residues predominate over residues 523 to 532; it reads DLAKREKDTE. Position 578–579 (578–579) interacts with NADP(+); sequence CF.

This sequence belongs to the ferric reductase (FRE) family. FAD is required as a cofactor.

It is found in the cell membrane. The catalysed reaction is 2 a Fe(II)-siderophore + NADP(+) + H(+) = 2 a Fe(III)-siderophore + NADPH. Its function is as follows. Cell surface metalloreductase. May be involved in copper homeostasis. This Saccharomyces cerevisiae (strain ATCC 204508 / S288c) (Baker's yeast) protein is Ferric/cupric reductase transmembrane component 7 (FRE7).